A 245-amino-acid polypeptide reads, in one-letter code: Probable phosphatase Spro_1934 (245 aa).

Zn(2+)-binding residues include H7, H9, H15, H40, E73, H101, H131, D192, and H194.

It belongs to the PHP family. As to quaternary structure, homotrimer. The cofactor is Zn(2+).

The polypeptide is Probable phosphatase Spro_1934 (Serratia proteamaculans (strain 568)).